Consider the following 310-residue polypeptide: Probable deoxyhypusine synthase (310 aa).

K284 acts as the Nucleophile in catalysis.

Belongs to the deoxyhypusine synthase family. Requires NAD(+) as cofactor.

The enzyme catalyses [eIF5A protein]-L-lysine + spermidine = [eIF5A protein]-deoxyhypusine + propane-1,3-diamine. It functions in the pathway protein modification; eIF5A hypusination. Catalyzes the NAD-dependent oxidative cleavage of spermidine and the subsequent transfer of the butylamine moiety of spermidine to the epsilon-amino group of a specific lysine residue of the eIF-5A precursor protein to form the intermediate deoxyhypusine residue. This is Probable deoxyhypusine synthase (dys) from Thermoplasma acidophilum (strain ATCC 25905 / DSM 1728 / JCM 9062 / NBRC 15155 / AMRC-C165).